A 472-amino-acid polypeptide reads, in one-letter code: Eukaryotic translation initiation factor 2 subunit 3, X-linked (472 aa).

N-acetylalanine is present on A2. S16 is modified (phosphoserine). In terms of domain architecture, tr-type G spans 39-248; it reads QATINIGTIG…IVKKIPVPPR (210 aa). Residues 48–55 are G1; sequence GHVAHGKS. 51–56 is a binding site for GTP; it reads AHGKST. Residues 76–80 form a G2 region; sequence NITIK. Residues 134–137 form a G3 region; sequence DCPG. GTP contacts are provided by residues 190–193 and 225–227; these read NKID and SAQ. Residues 190 to 193 form a G4 region; the sequence is NKID. The segment at 225–227 is G5; that stretch reads SAQ. Positions 457 to 469 are interacts with Cdc123; that stretch reads GQIRRGVTIKPTV.

This sequence belongs to the TRAFAC class translation factor GTPase superfamily. Classic translation factor GTPase family. EIF2G subfamily. As to quaternary structure, eukaryotic translation initiation factor 2 eIF2 is a heterotrimeric complex composed of an alpha (EIF2S1), a beta (EIF2S2) and a gamma (EIF2S3) chain. eIF2 is member of the 43S pre-initiation complex (43S PIC). Interacts (via C-terminus) with CDC123; the interaction is direct. Widely expressed.

The protein localises to the cytoplasm. It is found in the cytosol. The enzyme catalyses GTP + H2O = GDP + phosphate + H(+). Its function is as follows. Member of the eIF2 complex that functions in the early steps of protein synthesis by forming a ternary complex with GTP and initiator tRNA. This complex binds to a 40S ribosomal subunit, followed by mRNA binding to form the 43S pre-initiation complex (43S PIC). Junction of the 60S ribosomal subunit to form the 80S initiation complex is preceded by hydrolysis of the GTP bound to eIF2 and release of an eIF2-GDP binary complex. In order for eIF2 to recycle and catalyze another round of initiation, the GDP bound to eIF2 must exchange with GTP by way of a reaction catalyzed by eIF-2B. Along with its paralog on chromosome Y, may contribute to spermatogenesis up to the round spermatid stage. The sequence is that of Eukaryotic translation initiation factor 2 subunit 3, X-linked (Eif2s3) from Rattus norvegicus (Rat).